Here is an 89-residue protein sequence, read N- to C-terminus: Small ribosomal subunit protein uS17 (89 aa).

This sequence belongs to the universal ribosomal protein uS17 family. As to quaternary structure, part of the 30S ribosomal subunit.

In terms of biological role, one of the primary rRNA binding proteins, it binds specifically to the 5'-end of 16S ribosomal RNA. The polypeptide is Small ribosomal subunit protein uS17 (Chlorobium phaeobacteroides (strain BS1)).